Consider the following 144-residue polypeptide: UPF0102 protein BMA2801 (144 aa).

The segment at 1–28 is disordered; the sequence is MCHAREASPGTGEPEAAPRDNFPRAAGS.

The protein belongs to the UPF0102 family.

The sequence is that of UPF0102 protein BMA2801 from Burkholderia mallei (strain ATCC 23344).